The primary structure comprises 92 residues: Small ribosomal subunit protein uS19c (92 aa).

This sequence belongs to the universal ribosomal protein uS19 family.

It is found in the plastid. In terms of biological role, protein S19 forms a complex with S13 that binds strongly to the 16S ribosomal RNA. The protein is Small ribosomal subunit protein uS19c of Cuscuta obtusiflora (Peruvian dodder).